The following is a 263-amino-acid chain: 4-hydroxy-tetrahydrodipicolinate reductase (263 aa).

NAD(+)-binding positions include 7–12 (GASGRM) and D33. R34 contributes to the NADP(+) binding site. NAD(+) is bound by residues 96-98 (GTT) and 120-123 (APNM). Residue H153 is the Proton donor/acceptor of the active site. H154 is a binding site for (S)-2,3,4,5-tetrahydrodipicolinate. The active-site Proton donor is K157. Residue 163 to 164 (GT) participates in (S)-2,3,4,5-tetrahydrodipicolinate binding.

The protein belongs to the DapB family.

It localises to the cytoplasm. It catalyses the reaction (S)-2,3,4,5-tetrahydrodipicolinate + NAD(+) + H2O = (2S,4S)-4-hydroxy-2,3,4,5-tetrahydrodipicolinate + NADH + H(+). The enzyme catalyses (S)-2,3,4,5-tetrahydrodipicolinate + NADP(+) + H2O = (2S,4S)-4-hydroxy-2,3,4,5-tetrahydrodipicolinate + NADPH + H(+). The protein operates within amino-acid biosynthesis; L-lysine biosynthesis via DAP pathway; (S)-tetrahydrodipicolinate from L-aspartate: step 4/4. Functionally, catalyzes the conversion of 4-hydroxy-tetrahydrodipicolinate (HTPA) to tetrahydrodipicolinate. The chain is 4-hydroxy-tetrahydrodipicolinate reductase from Ralstonia nicotianae (strain ATCC BAA-1114 / GMI1000) (Ralstonia solanacearum).